Consider the following 167-residue polypeptide: Cytochrome b6-f complex subunit 4 (167 aa).

3 consecutive transmembrane segments (helical) span residues 36–56 (LLYISPVVILGTIACNVGLAV), 95–115 (LLGVLLMVLVPTGLLTVPFLE), and 131–151 (TVFLIGTAVALWLGIGATLPI).

The protein belongs to the cytochrome b family. PetD subfamily. In terms of assembly, the 4 large subunits of the cytochrome b6-f complex are cytochrome b6, subunit IV (17 kDa polypeptide, petD), cytochrome f and the Rieske protein, while the 4 small subunits are petG, petL, petM and petN. The complex functions as a dimer.

It is found in the plastid. It localises to the chloroplast thylakoid membrane. In terms of biological role, component of the cytochrome b6-f complex, which mediates electron transfer between photosystem II (PSII) and photosystem I (PSI), cyclic electron flow around PSI, and state transitions. The protein is Cytochrome b6-f complex subunit 4 of Calycanthus floridus var. glaucus (Eastern sweetshrub).